We begin with the raw amino-acid sequence, 237 residues long: Ribosomal RNA large subunit methyltransferase E (237 aa).

S-adenosyl-L-methionine-binding residues include Gly76, Trp78, Asp99, Asp115, and Asp139. Catalysis depends on Lys179, which acts as the Proton acceptor.

Belongs to the class I-like SAM-binding methyltransferase superfamily. RNA methyltransferase RlmE family.

The protein resides in the cytoplasm. It catalyses the reaction uridine(2552) in 23S rRNA + S-adenosyl-L-methionine = 2'-O-methyluridine(2552) in 23S rRNA + S-adenosyl-L-homocysteine + H(+). In terms of biological role, specifically methylates the uridine in position 2552 of 23S rRNA at the 2'-O position of the ribose in the fully assembled 50S ribosomal subunit. This is Ribosomal RNA large subunit methyltransferase E from Rhodopseudomonas palustris (strain ATCC BAA-98 / CGA009).